The sequence spans 321 residues: UPF0026 protein MJ1312 (321 aa).

In terms of domain architecture, Radical SAM core spans 11-236 (RRLGKSLGIN…AIFNEIIGKN (226 aa)). Positions 27, 31, and 34 each coordinate [4Fe-4S] cluster.

It belongs to the UPF0026 family. It depends on [4Fe-4S] cluster as a cofactor.

This Methanocaldococcus jannaschii (strain ATCC 43067 / DSM 2661 / JAL-1 / JCM 10045 / NBRC 100440) (Methanococcus jannaschii) protein is UPF0026 protein MJ1312.